The chain runs to 490 residues: 2,3-bisphosphoglycerate-independent phosphoglycerate mutase (490 aa).

Residues D9 and S59 each coordinate Mn(2+). The Phosphoserine intermediate role is filled by S59. Residues H116, 145-146, R175, R181, 246-249, and K319 each bind substrate; these read RD and RSDR. Mn(2+)-binding residues include D385, H389, D426, H427, and H444.

The protein belongs to the BPG-independent phosphoglycerate mutase family. Monomer. Mn(2+) serves as cofactor.

The enzyme catalyses (2R)-2-phosphoglycerate = (2R)-3-phosphoglycerate. It functions in the pathway carbohydrate degradation; glycolysis; pyruvate from D-glyceraldehyde 3-phosphate: step 3/5. In terms of biological role, catalyzes the interconversion of 2-phosphoglycerate and 3-phosphoglycerate. The protein is 2,3-bisphosphoglycerate-independent phosphoglycerate mutase of Helicobacter hepaticus (strain ATCC 51449 / 3B1).